Here is an 85-residue protein sequence, read N- to C-terminus: Large ribosomal subunit protein eL43 (85 aa).

Positions 32, 35, 50, and 53 each coordinate Zn(2+). The C4-type zinc finger occupies 32-53; the sequence is CTFCGKTKMKRRAVGIWHCGSC.

The protein belongs to the eukaryotic ribosomal protein eL43 family. As to quaternary structure, component of the large ribosomal subunit.

Its subcellular location is the cytoplasm. Component of the large ribosomal subunit. The ribosome is a large ribonucleoprotein complex responsible for the synthesis of proteins in the cell. The chain is Large ribosomal subunit protein eL43 (rpl37a) from Myxine glutinosa (Atlantic hagfish).